The chain runs to 210 residues: Probable membrane protein MT1774 (210 aa).

A run of 2 helical transmembrane segments spans residues 43–63 and 165–185; these read AVVMLLAVTVSLLTIPFAAAA and ALAALGLWLSVAAVAGALLAL.

It is found in the cell membrane. The protein is Probable membrane protein MT1774 of Mycobacterium tuberculosis (strain CDC 1551 / Oshkosh).